A 117-amino-acid chain; its full sequence is Immunoglobulin heavy variable 5-10-1 (117 aa).

The signal sequence occupies residues 1 to 19; that stretch reads MGSTAILALLLAVLQGVCA. The segment at 20 to 44 is framework-1; the sequence is EVQLVQSGAEVKKPGESLRISCKGS. The region spanning 20–117 is the Ig-like domain; it reads EVQLVQSGAE…SDTAMYYCAR (98 aa). C41 and C115 form a disulfide bridge. The interval 45–52 is complementarity-determining-1; it reads GYSFTSYW. A framework-2 region spans residues 53–69; sequence ISWVRQMPGKGLEWMGR. Residues 70-77 form a complementarity-determining-2 region; the sequence is IDPSDSYT. The tract at residues 78–115 is framework-3; it reads NYSPSFQGHVTISADKSISTAYLQWSSLKASDTAMYYC. A complementarity-determining-3 region spans residues 116-117; it reads AR.

In terms of assembly, immunoglobulins are composed of two identical heavy chains and two identical light chains; disulfide-linked.

The protein resides in the secreted. It localises to the cell membrane. V region of the variable domain of immunoglobulin heavy chains that participates in the antigen recognition. Immunoglobulins, also known as antibodies, are membrane-bound or secreted glycoproteins produced by B lymphocytes. In the recognition phase of humoral immunity, the membrane-bound immunoglobulins serve as receptors which, upon binding of a specific antigen, trigger the clonal expansion and differentiation of B lymphocytes into immunoglobulins-secreting plasma cells. Secreted immunoglobulins mediate the effector phase of humoral immunity, which results in the elimination of bound antigens. The antigen binding site is formed by the variable domain of one heavy chain, together with that of its associated light chain. Thus, each immunoglobulin has two antigen binding sites with remarkable affinity for a particular antigen. The variable domains are assembled by a process called V-(D)-J rearrangement and can then be subjected to somatic hypermutations which, after exposure to antigen and selection, allow affinity maturation for a particular antigen. The sequence is that of Immunoglobulin heavy variable 5-10-1 from Homo sapiens (Human).